A 247-amino-acid chain; its full sequence is Carboxy-S-adenosyl-L-methionine synthase (247 aa).

S-adenosyl-L-methionine is bound by residues Tyr-40, 65–67 (GAS), 90–91 (DN), 122–123 (DI), Asn-137, and Arg-204.

The protein belongs to the class I-like SAM-binding methyltransferase superfamily. Cx-SAM synthase family. As to quaternary structure, homodimer.

It catalyses the reaction prephenate + S-adenosyl-L-methionine = carboxy-S-adenosyl-L-methionine + 3-phenylpyruvate + H2O. Its function is as follows. Catalyzes the conversion of S-adenosyl-L-methionine (SAM) to carboxy-S-adenosyl-L-methionine (Cx-SAM). The sequence is that of Carboxy-S-adenosyl-L-methionine synthase from Pseudomonas putida (strain ATCC 700007 / DSM 6899 / JCM 31910 / BCRC 17059 / LMG 24140 / F1).